A 256-amino-acid polypeptide reads, in one-letter code: Probable aquaporin TIP-type alpha (256 aa).

Residues 1–24 lie on the Cytoplasmic side of the membrane; that stretch reads MATRRYSFGRTDEATHPDSMRASL. Ser-7 is modified (phosphoserine; by CPK). Residues 25–44 traverse the membrane as a helical segment; that stretch reads AEFASTFIFVFAGEGSGLAL. The Vacuolar portion of the chain corresponds to 45 to 57; it reads VKIYQDSAFSAGE. Residues 58 to 77 traverse the membrane as a helical segment; the sequence is LLALALAHAFALFAAVSASM. The Cytoplasmic segment spans residues 78-102; it reads HVSGGHVNPAVSFGALIGGRISVIR. The NPA 1 motif lies at 85-87; that stretch reads NPA. Residues 103-121 traverse the membrane as a helical segment; it reads AVYYWIAQLLGSIVAALVL. The Vacuolar portion of the chain corresponds to 122–143; that stretch reads RLVTNNMRPSGFHVSPGVGVGH. The helical transmembrane segment at 144–164 threads the bilayer; sequence MFILEVVMTFGLMYTVYGTAI. The Cytoplasmic portion of the chain corresponds to 165–169; sequence DPKRG. Residues 170–189 form a helical membrane-spanning segment; that stretch reads AVSYIAPLAIGLIVGANILV. Residues 190–216 are Vacuolar-facing; sequence GGPFDGACMNPALAFGPSLVGWQWHQH. Positions 199–201 match the NPA 2 motif; the sequence is NPA. Residues 217 to 239 traverse the membrane as a helical segment; it reads WIFWVGPLLGAALAALVYEYAVI. The Cytoplasmic segment spans residues 240–256; the sequence is PIEPPPHHHQPLATEDY.

Belongs to the MIP/aquaporin (TC 1.A.8) family. TIP (TC 1.A.8.10) subfamily. In terms of processing, phosphorylated by a tonoplast-bound calcium-dependent protein kinase. In terms of tissue distribution, found in all seed tissues that are alive at seed maturity, but not in tissues that lose viability during seed maturation.

It localises to the vacuole membrane. Channel protein in tonoplast. These proteins may allow the diffusion of amino acids and/or peptides from the vacuolar compartment to the cytoplasm. The polypeptide is Probable aquaporin TIP-type alpha (Phaseolus vulgaris (Kidney bean)).